A 67-amino-acid chain; its full sequence is Conotoxin Cal14.2c (67 aa).

A signal peptide spans Met1–Gly20. The propeptide occupies Phe21–Gln48.

This sequence belongs to the conotoxin L superfamily. Contains 2 disulfide bonds. In terms of tissue distribution, expressed by the venom duct.

It is found in the secreted. Functionally, probable neurotoxin with unknown target. Possibly targets ion channels. The sequence is that of Conotoxin Cal14.2c from Californiconus californicus (California cone).